A 322-amino-acid polypeptide reads, in one-letter code: Undecaprenyl-phosphate 4-deoxy-4-formamido-L-arabinose transferase (322 aa).

Residues 1-235 (MFEIHPVKKV…TCLTTTPLRM (235 aa)) lie on the Cytoplasmic side of the membrane. A helical transmembrane segment spans residues 236 to 256 (LSLLGSIIAIGGFSIAVLLVI). The Periplasmic portion of the chain corresponds to 257 to 269 (LRLTFGPQWAAEG). A helical membrane pass occupies residues 270–290 (VFMLFAVLFTFIGAQFIGMGL). Topologically, residues 291–322 (LGEYIGRIYTDVRARPRYFVQQVIRPSSKENE) are cytoplasmic.

The protein belongs to the glycosyltransferase 2 family.

The protein resides in the cell inner membrane. The enzyme catalyses UDP-4-deoxy-4-formamido-beta-L-arabinose + di-trans,octa-cis-undecaprenyl phosphate = 4-deoxy-4-formamido-alpha-L-arabinopyranosyl di-trans,octa-cis-undecaprenyl phosphate + UDP. The protein operates within glycolipid biosynthesis; 4-amino-4-deoxy-alpha-L-arabinose undecaprenyl phosphate biosynthesis; 4-amino-4-deoxy-alpha-L-arabinose undecaprenyl phosphate from UDP-4-deoxy-4-formamido-beta-L-arabinose and undecaprenyl phosphate: step 1/2. It participates in bacterial outer membrane biogenesis; lipopolysaccharide biosynthesis. Functionally, catalyzes the transfer of 4-deoxy-4-formamido-L-arabinose from UDP to undecaprenyl phosphate. The modified arabinose is attached to lipid A and is required for resistance to polymyxin and cationic antimicrobial peptides. The polypeptide is Undecaprenyl-phosphate 4-deoxy-4-formamido-L-arabinose transferase (Escherichia coli (strain SMS-3-5 / SECEC)).